The sequence spans 674 residues: Translation factor GUF1, mitochondrial (674 aa).

The N-terminal 33 residues, 1-33 (MLRPWFCFRSCVSLLSNRRQYGFRYLATAEPSK), are a transit peptide targeting the mitochondrion. Residues 32 to 51 (SKSEKPAKPVKPAKPMSVQE) form a disordered region. The tr-type G domain occupies 75 to 257 (QNYRNFSIVA…SIIKNIPAPV (183 aa)). GTP-binding positions include 84 to 91 (AHVDHGKS), 150 to 154 (DTPGH), and 204 to 207 (NKID).

This sequence belongs to the TRAFAC class translation factor GTPase superfamily. Classic translation factor GTPase family. LepA subfamily.

The protein resides in the mitochondrion inner membrane. It carries out the reaction GTP + H2O = GDP + phosphate + H(+). Promotes mitochondrial protein synthesis. May act as a fidelity factor of the translation reaction, by catalyzing a one-codon backward translocation of tRNAs on improperly translocated ribosomes. Binds to mitochondrial ribosomes in a GTP-dependent manner. In Lodderomyces elongisporus (strain ATCC 11503 / CBS 2605 / JCM 1781 / NBRC 1676 / NRRL YB-4239) (Yeast), this protein is Translation factor GUF1, mitochondrial.